Consider the following 145-residue polypeptide: Hemoglobin subunit beta (145 aa).

Residues 1–145 form the Globin domain; it reads MLTSEEKAAV…VANALAHRYH (145 aa). At Thr-11 the chain carries Phosphothreonine. Lys-58 is subject to N6-acetyllysine. Residue His-62 participates in heme b binding. An N6-acetyllysine modification is found at Lys-81. His-91 serves as a coordination point for heme b. Residue Cys-92 is modified to S-nitrosocysteine.

The protein belongs to the globin family. In terms of assembly, heterotetramer of two alpha chains and two beta chains. As to expression, red blood cells.

Its function is as follows. Involved in oxygen transport from the lung to the various peripheral tissues. The sequence is that of Hemoglobin subunit beta (HBB) from Rangifer tarandus (Reindeer).